A 179-amino-acid chain; its full sequence is Replication restart protein DnaT (179 aa).

The tract at residues 156 to 179 (GGLPKRDVNTVSEPDSQIPPGFRG) is disordered.

It belongs to the DnaT family. Homooligomerizes. Interacts with PriB. Component of the replication restart primosome. Primosome assembly occurs via a 'hand-off' mechanism. PriA binds to replication forks, subsequently PriB then DnaT bind; DnaT then displaces ssDNA to generate the helicase loading substrate.

Its function is as follows. Involved in the restart of stalled replication forks, which reloads the replicative helicase on sites other than the origin of replication. Can function in multiple replication restart pathways. Displaces ssDNA from a PriB-ssDNA complex. Probably forms a spiral filament on ssDNA. This chain is Replication restart protein DnaT, found in Escherichia coli O17:K52:H18 (strain UMN026 / ExPEC).